The sequence spans 122 residues: Methylglyoxal synthase (122 aa).

In terms of domain architecture, MGS-like spans 1–122; it reads MRIALIAHDK…DLFIKHLKGK (122 aa). Residues histidine 8, lysine 12, 34–37, and 54–55 contribute to the substrate site; these read TGTT and SG. The Proton donor/acceptor role is filled by aspartate 60. Residue histidine 87 coordinates substrate.

The protein belongs to the methylglyoxal synthase family.

It catalyses the reaction dihydroxyacetone phosphate = methylglyoxal + phosphate. Its function is as follows. Catalyzes the formation of methylglyoxal from dihydroxyacetone phosphate. This Acholeplasma laidlawii (strain PG-8A) protein is Methylglyoxal synthase.